The sequence spans 758 residues: 5-methyltetrahydropteroyltriglutamate--homocysteine methyltransferase (758 aa).

5-methyltetrahydropteroyltri-L-glutamate-binding positions include 15 to 18 (RELK) and Lys114. Residues 433-435 (IGS) and Glu486 each bind L-homocysteine. Residues 433 to 435 (IGS) and Glu486 each bind L-methionine. 5-methyltetrahydropteroyltri-L-glutamate-binding positions include 517 to 518 (RC) and Trp563. Asp601 is a binding site for L-homocysteine. Asp601 is an L-methionine binding site. A 5-methyltetrahydropteroyltri-L-glutamate-binding site is contributed by Glu607. Positions 643, 645, and 667 each coordinate Zn(2+). His696 acts as the Proton donor in catalysis. Cys728 contributes to the Zn(2+) binding site.

This sequence belongs to the vitamin-B12 independent methionine synthase family. It depends on Zn(2+) as a cofactor.

It carries out the reaction 5-methyltetrahydropteroyltri-L-glutamate + L-homocysteine = tetrahydropteroyltri-L-glutamate + L-methionine. The protein operates within amino-acid biosynthesis; L-methionine biosynthesis via de novo pathway; L-methionine from L-homocysteine (MetE route): step 1/1. Functionally, catalyzes the transfer of a methyl group from 5-methyltetrahydrofolate to homocysteine resulting in methionine formation. This chain is 5-methyltetrahydropteroyltriglutamate--homocysteine methyltransferase, found in Syntrophotalea carbinolica (strain DSM 2380 / NBRC 103641 / GraBd1) (Pelobacter carbinolicus).